A 278-amino-acid chain; its full sequence is Poly(3-hydroxyoctanoate) depolymerase (278 aa).

The N-terminal stretch at 1–33 (MPLRTLLCGLLLAVCLGQHALAASRCSERPRTL) is a signal peptide.

It is found in the secreted. It carries out the reaction Hydrolyzes the polyester poly{oxycarbonyl[(R)-2-pentylethylene]} to oligomers.. Functionally, hydrolysis of poly(3-hydroxyoctanoic acid). The polypeptide is Poly(3-hydroxyoctanoate) depolymerase (phaZ) (Pseudomonas fluorescens).